The chain runs to 290 residues: Ribonuclease 3 (290 aa).

One can recognise an RNase III domain in the interval 20–145 (YSCFYRILGF…FIGAIYLDRG (126 aa)). A Mg(2+)-binding site is contributed by E62. D66 is an active-site residue. The Mg(2+) site is built by N131 and E134. E134 is an active-site residue. Residues 173-242 (NFKSKLIEWS…AQMTLKKIKG (70 aa)) enclose the DRBM domain. Residues 254-290 (KTQNNVPAEDTTPESEMSLTAENQQIDEIISTEEISV) are disordered. Residues 267 to 279 (ESEMSLTAENQQI) show a composition bias toward polar residues.

This sequence belongs to the ribonuclease III family. In terms of assembly, homodimer. Mg(2+) is required as a cofactor.

The protein resides in the cytoplasm. It carries out the reaction Endonucleolytic cleavage to 5'-phosphomonoester.. In terms of biological role, digests double-stranded RNA. Involved in the processing of primary rRNA transcript to yield the immediate precursors to the large and small rRNAs (23S and 16S). Processes some mRNAs, and tRNAs when they are encoded in the rRNA operon. Processes pre-crRNA and tracrRNA of type II CRISPR loci if present in the organism. The protein is Ribonuclease 3 of Bacteroides fragilis (strain YCH46).